The primary structure comprises 192 residues: Protein FAM169BP (192 aa).

Positions 121–192 (YQAHPGNSED…PPGKLTRSSP (72 aa)) are disordered. Residues 159–177 (EELEDTKDDPECGVEEEDA) show a composition bias toward acidic residues.

It belongs to the FAM169 family.

The polypeptide is Protein FAM169BP (Homo sapiens (Human)).